The chain runs to 418 residues: Glutamyl-tRNA reductase (418 aa).

Substrate contacts are provided by residues 49–52, S109, 114–116, and Q120; these read TCNR and EPQ. The active-site Nucleophile is the C50. Residue 189–194 coordinates NADP(+); sequence GAGETI.

This sequence belongs to the glutamyl-tRNA reductase family. In terms of assembly, homodimer.

It catalyses the reaction (S)-4-amino-5-oxopentanoate + tRNA(Glu) + NADP(+) = L-glutamyl-tRNA(Glu) + NADPH + H(+). It functions in the pathway porphyrin-containing compound metabolism; protoporphyrin-IX biosynthesis; 5-aminolevulinate from L-glutamyl-tRNA(Glu): step 1/2. Functionally, catalyzes the NADPH-dependent reduction of glutamyl-tRNA(Glu) to glutamate 1-semialdehyde (GSA). This is Glutamyl-tRNA reductase from Salmonella heidelberg (strain SL476).